Here is a 230-residue protein sequence, read N- to C-terminus: Large ribosomal subunit protein uL1 (230 aa).

This sequence belongs to the universal ribosomal protein uL1 family. In terms of assembly, part of the 50S ribosomal subunit.

In terms of biological role, binds directly to 23S rRNA. The L1 stalk is quite mobile in the ribosome, and is involved in E site tRNA release. Protein L1 is also a translational repressor protein, it controls the translation of the L11 operon by binding to its mRNA. In Rhodopseudomonas palustris (strain BisA53), this protein is Large ribosomal subunit protein uL1.